A 306-amino-acid chain; its full sequence is Glutaminase (306 aa).

Substrate is bound by residues serine 64, asparagine 115, glutamate 159, asparagine 166, tyrosine 190, tyrosine 242, and valine 260.

Belongs to the glutaminase family. As to quaternary structure, homotetramer.

It carries out the reaction L-glutamine + H2O = L-glutamate + NH4(+). This chain is Glutaminase, found in Aeromonas hydrophila subsp. hydrophila (strain ATCC 7966 / DSM 30187 / BCRC 13018 / CCUG 14551 / JCM 1027 / KCTC 2358 / NCIMB 9240 / NCTC 8049).